The sequence spans 240 residues: Putative protein FAM10A4 (240 aa).

The interval Met-38–Glu-94 is disordered. Over residues Ala-46–Glu-69 the composition is skewed to basic and acidic residues. Over residues Ile-85–Glu-94 the composition is skewed to acidic residues. TPR repeat units follow at residues Ala-110–Leu-143, Ile-145–Ser-177, and Gln-179–Glu-211. The interval Val-220–Glu-240 is disordered. Residues Lys-226–Glu-240 are compositionally biased toward basic and acidic residues.

Belongs to the FAM10 family. As to expression, highly expressed in bone marrow and weakly in placenta, pancreas, heart and HeLa cell line.

The protein resides in the cytoplasm. The sequence is that of Putative protein FAM10A4 (ST13P4) from Homo sapiens (Human).